A 931-amino-acid polypeptide reads, in one-letter code: Myelin regulatory factor homolog 1 (931 aa).

Topologically, residues 1-658 (MSSSDLLKGE…SCGSRLSQGT (658 aa)) are cytoplasmic. Residues 29-143 (TDEDDGSMVS…QQHQQTRGGN (115 aa)) form a disordered region. Over residues 37-52 (VSPTSSADSMHQNLGV) the composition is skewed to polar residues. Residues 53–68 (QQQQQQMLQAQQRQNQ) are compositionally biased toward low complexity. A compositionally biased stretch (polar residues) spans 117–126 (DNGNQTMNNI). The segment covering 127–138 (QSQQLSQQQHQQ) has biased composition (low complexity). A DNA-binding region (NDT80) is located at residues 169–436 (GTAAVNQPTN…TNPGSFEPQD (268 aa)). In terms of domain architecture, Peptidase S74 spans 483–582 (SDIRLKEAIT…RMTGDLDSKI (100 aa)). The chain crosses the membrane as a helical span at residues 659–679 (VVTLVSIMAACLLAMSALYVL). The Lumenal segment spans residues 680–931 (DWHNRNYGYH…FYRMCTLSSS (252 aa)). Residues Asn-797 and Asn-912 are each glycosylated (N-linked (GlcNAc...) asparagine).

The protein belongs to the MRF family. Homotrimer. Interacts with myrf-2. Interacts (via C-terminus) with pan-1 (via LRR regions); the interaction promotes the role of myrf-1 in the synaptic remodeling of DD GABAergic motor neurons at the cell membrane. Myelin regulatory factor: Follows autocatalytic cleavage via the peptidase S74 domain. Autoprocessing is apparently constitutive and is essential for transcriptional activity. As to expression, widely expressed in many tissues, including neuronal, muscle and epidermal stem cells. In neurons, expressed in dorsal D (DD) GABAergic motor neurons.

It is found in the endoplasmic reticulum membrane. It localises to the nucleus. Its subcellular location is the apical cell membrane. The protein resides in the cytoplasm. Functionally, constitutes a precursor of the transcription factor. Mediates the autocatalytic cleavage that releases the Myelin regulatory factor homolog 1, N-terminal component that specifically activates transcription of genes involved in synaptic rewiring during nervous system maturation. Membrane-bound part that has no transcription factor activity and remains attached to the endoplasmic reticulum membrane following cleavage. Its function is as follows. Transcription factor that specifically activates expression of genes involved in synaptic rewiring during nervous system maturation. Specifically required for dorsal D (DD) GABAergic motor neurons synaptic rewiring. Acts in complex with myrf-2 paralog. In Caenorhabditis elegans, this protein is Myelin regulatory factor homolog 1.